The primary structure comprises 423 residues: Adenylosuccinate synthetase (423 aa).

GTP is bound by residues 12–18 (GDEGKGK) and 40–42 (GHT). Asp-13 serves as the catalytic Proton acceptor. Mg(2+) contacts are provided by Asp-13 and Gly-40. Residues 13–16 (DEGK), 38–41 (NAGH), Thr-129, Arg-143, Gln-224, Thr-239, and Arg-303 each bind IMP. The active-site Proton donor is His-41. Substrate is bound at residue 299-305 (SVTGRQR). Residues Arg-305, 331 to 333 (KGD), and 412 to 414 (SVG) contribute to the GTP site.

The protein belongs to the adenylosuccinate synthetase family. Homodimer. Mg(2+) is required as a cofactor.

It localises to the cytoplasm. It carries out the reaction IMP + L-aspartate + GTP = N(6)-(1,2-dicarboxyethyl)-AMP + GDP + phosphate + 2 H(+). It functions in the pathway purine metabolism; AMP biosynthesis via de novo pathway; AMP from IMP: step 1/2. Plays an important role in the de novo pathway of purine nucleotide biosynthesis. Catalyzes the first committed step in the biosynthesis of AMP from IMP. The polypeptide is Adenylosuccinate synthetase (Flavobacterium johnsoniae (strain ATCC 17061 / DSM 2064 / JCM 8514 / BCRC 14874 / CCUG 350202 / NBRC 14942 / NCIMB 11054 / UW101) (Cytophaga johnsonae)).